We begin with the raw amino-acid sequence, 874 residues long: Alanine--tRNA ligase (874 aa).

4 residues coordinate Zn(2+): His564, His568, Cys666, and His670.

Belongs to the class-II aminoacyl-tRNA synthetase family. Zn(2+) is required as a cofactor.

It localises to the cytoplasm. It catalyses the reaction tRNA(Ala) + L-alanine + ATP = L-alanyl-tRNA(Ala) + AMP + diphosphate. Catalyzes the attachment of alanine to tRNA(Ala) in a two-step reaction: alanine is first activated by ATP to form Ala-AMP and then transferred to the acceptor end of tRNA(Ala). Also edits incorrectly charged Ser-tRNA(Ala) and Gly-tRNA(Ala) via its editing domain. The polypeptide is Alanine--tRNA ligase (Carboxydothermus hydrogenoformans (strain ATCC BAA-161 / DSM 6008 / Z-2901)).